The following is a 114-amino-acid chain: Non-specific lipid-transfer protein 1 (114 aa).

An N-terminal signal peptide occupies residues 1 to 23 (MEMVSKIACFVLLCMVVVAPHAE). 4 disulfides stabilise this stretch: cysteine 27/cysteine 73, cysteine 37/cysteine 50, cysteine 51/cysteine 96, and cysteine 71/cysteine 110.

Belongs to the plant LTP family.

In terms of biological role, plant non-specific lipid-transfer proteins transfer phospholipids as well as galactolipids across membranes. May play a role in wax or cutin deposition in the cell walls of expanding epidermal cells and certain secretory tissues. The polypeptide is Non-specific lipid-transfer protein 1 (TSW12) (Solanum lycopersicum (Tomato)).